The chain runs to 316 residues: Lipooligosaccharide heptosyltransferase 2 (316 aa).

This sequence belongs to the glycosyltransferase 9 family.

The enzyme catalyses an L-alpha-D-Hep-(1-&gt;5)-[alpha-Kdo-(2-&gt;4)]-alpha-Kdo-(2-&gt;6)-lipid A + ADP-L-glycero-beta-D-manno-heptose = an L-alpha-D-Hep-(1-&gt;3)-L-alpha-D-Hep-(1-&gt;5)-[alpha-Kdo-(2-&gt;4)]-alpha-Kdo-(2-&gt;6)-lipid A + ADP + H(+). The protein operates within bacterial outer membrane biogenesis; LOS core biosynthesis. Its function is as follows. Glycosyltransferase involved in the biosynthesis of the core oligosaccharide region of lipooligosaccharide (LOS). Catalyzes the addition of the second heptose unit to the heptosyl-Kdo2-lipid A module. The sequence is that of Lipooligosaccharide heptosyltransferase 2 from Campylobacter jejuni subsp. jejuni serotype O:6 (strain 81116 / NCTC 11828).